A 201-amino-acid polypeptide reads, in one-letter code: Recombination protein RecR (201 aa).

The C4-type zinc finger occupies 57 to 74 (CRICGNITENSVNPCAIC). One can recognise a Toprim domain in the interval 82 to 178 (STVFVVENSR…KVTRLAHGLA (97 aa)).

The protein belongs to the RecR family.

Its function is as follows. May play a role in DNA repair. It seems to be involved in an RecBC-independent recombinational process of DNA repair. It may act with RecF and RecO. The protein is Recombination protein RecR of Leuconostoc citreum (strain KM20).